The sequence spans 345 residues: tRNA pseudouridine synthase B (345 aa).

The active-site Nucleophile is the aspartate 39.

Belongs to the pseudouridine synthase TruB family. Type 1 subfamily.

The catalysed reaction is uridine(55) in tRNA = pseudouridine(55) in tRNA. Its function is as follows. Responsible for synthesis of pseudouridine from uracil-55 in the psi GC loop of transfer RNAs. The polypeptide is tRNA pseudouridine synthase B (Rickettsia africae (strain ESF-5)).